Here is a 117-residue protein sequence, read N- to C-terminus: B-enzyme (117 aa).

The active site involves Asp89.

The catalysed reaction is Hydrolysis of (1-&gt;4)-beta-linkages between N-acetylmuramic acid and N-acetyl-D-glucosamine residues in a peptidoglycan and between N-acetyl-D-glucosamine residues in chitodextrins.. This Bacillus subtilis protein is B-enzyme (lyzB).